Here is a 163-residue protein sequence, read N- to C-terminus: D-aminoacyl-tRNA deacylase (163 aa).

Positions 141–142 match the Gly-cisPro motif, important for rejection of L-amino acids motif; the sequence is GP.

Belongs to the DTD family. In terms of assembly, homodimer.

It is found in the cytoplasm. It catalyses the reaction glycyl-tRNA(Ala) + H2O = tRNA(Ala) + glycine + H(+). The catalysed reaction is a D-aminoacyl-tRNA + H2O = a tRNA + a D-alpha-amino acid + H(+). Its function is as follows. An aminoacyl-tRNA editing enzyme that deacylates mischarged D-aminoacyl-tRNAs. Also deacylates mischarged glycyl-tRNA(Ala), protecting cells against glycine mischarging by AlaRS. Acts via tRNA-based rather than protein-based catalysis; rejects L-amino acids rather than detecting D-amino acids in the active site. By recycling D-aminoacyl-tRNA to D-amino acids and free tRNA molecules, this enzyme counteracts the toxicity associated with the formation of D-aminoacyl-tRNA entities in vivo and helps enforce protein L-homochirality. This Neisseria meningitidis serogroup A / serotype 4A (strain DSM 15465 / Z2491) protein is D-aminoacyl-tRNA deacylase.